The primary structure comprises 122 residues: T-cell receptor beta chain V region C5 (122 aa).

The N-terminal stretch at 1–7 (ILLCAKH) is a signal peptide. The interval 8–103 (MEAAVTQSPR…TAVYFCASSG (96 aa)) is v segment. A disulfide bridge connects residues C31 and C99. The d segment stretch occupies residues 104-108 (TGGAL). The segment at 109–122 (DTQYFGPGTRLLVL) is j segment.

The sequence is that of T-cell receptor beta chain V region C5 from Mus musculus (Mouse).